Here is an 80-residue protein sequence, read N- to C-terminus: uncharacterized protein (80 aa).

Transmembrane regions (helical) follow at residues 15 to 35 and 45 to 65; these read ALGLTLLYLAVWLVAAYLSGV and WFEMACILTPLLFIGLCWAMV.

It to H.influenzae HI_0974B.

The protein resides in the cell membrane. This is an uncharacterized protein from Escherichia coli (strain K12).